Reading from the N-terminus, the 402-residue chain is Secondary metabolism regulator laeA (402 aa).

The interval 1–70 (MSLKYYLNDL…MSPTEVCSTD (70 aa)) is disordered. Residues 11-21 (SDSDSESESEC) show a composition bias toward acidic residues.

This sequence belongs to the methyltransferase superfamily. LaeA methyltransferase family.

The protein localises to the nucleus. The catalysed reaction is L-methionyl-[protein] + S-adenosyl-L-methionine = S-methyl-L-methionyl-[protein] + S-adenosyl-L-homocysteine. Its function is as follows. Methyltransferase that performs automethylation. No other methyl-accepting substrate has been identified yet. Acts as a global regulator for secondary metabolite gene expression. Negatively regulates the production of coprinoferrin, a structurally novel acylated tripeptide hydroxamate siderophore. This chain is Secondary metabolism regulator laeA, found in Coprinopsis cinerea (strain Okayama-7 / 130 / ATCC MYA-4618 / FGSC 9003) (Inky cap fungus).